The following is a 194-amino-acid chain: Peptidyl-tRNA hydrolase (194 aa).

Tyr17 is a binding site for tRNA. Residue His22 is the Proton acceptor of the active site. Tyr68, Asn70, and Asn116 together coordinate tRNA.

This sequence belongs to the PTH family. In terms of assembly, monomer.

The protein localises to the cytoplasm. The catalysed reaction is an N-acyl-L-alpha-aminoacyl-tRNA + H2O = an N-acyl-L-amino acid + a tRNA + H(+). Its function is as follows. Hydrolyzes ribosome-free peptidyl-tRNAs (with 1 or more amino acids incorporated), which drop off the ribosome during protein synthesis, or as a result of ribosome stalling. Functionally, catalyzes the release of premature peptidyl moieties from peptidyl-tRNA molecules trapped in stalled 50S ribosomal subunits, and thus maintains levels of free tRNAs and 50S ribosomes. In Pseudomonas aeruginosa (strain LESB58), this protein is Peptidyl-tRNA hydrolase.